The following is a 499-amino-acid chain: Neuronal acetylcholine receptor subunit alpha-3 (499 aa).

The signal sequence occupies residues 1-25; it reads MGVVLLPPPLSMLMLVLMLLPAASA. Residues 26–244 are Extracellular-facing; it reads SEAEHRLFQY…PLFYTINLII (219 aa). N-linked (GlcNAc...) asparagine glycosylation is found at asparagine 49 and asparagine 166. Disulfide bonds link cysteine 153–cysteine 167 and cysteine 217–cysteine 218. The chain crosses the membrane as a helical span at residues 245-260; it reads PCLLISFLTVLVFYLP. The Cytoplasmic segment spans residues 261 to 262; the sequence is SD. Residues 263–279 traverse the membrane as a helical segment; that stretch reads CGEKVTLCISVLLSLTV. A Na(+)-binding site is contributed by glutamate 265. The Extracellular segment spans residues 280–301; the sequence is FLLVITETIPSTSLVIPLIGEY. The helical transmembrane segment at 302-320 threads the bilayer; that stretch reads LLFTMIFVTLSIVITVFVL. Residues 321-468 lie on the Cytoplasmic side of the membrane; that stretch reads NVHYRTPTTH…QDDWKYVAMV (148 aa). Serine 407 and serine 410 each carry phosphoserine. Residues 469 to 487 form a helical membrane-spanning segment; that stretch reads IDRIFLWVFILVCILGTAG. The Extracellular portion of the chain corresponds to 488–499; the sequence is LFLQPLMARDDT.

It belongs to the ligand-gated ion channel (TC 1.A.9) family. Acetylcholine receptor (TC 1.A.9.1) subfamily. Alpha-3/CHRNA3 sub-subfamily. As to quaternary structure, neuronal AChR is composed of two different types of subunits: alpha and beta. CHRNA3/Alpha-3 subunit can be combined to CHRNB2/beta-2 or CHRNB4/beta-4 to give rise to functional receptors. Part of a complex composed of STUB1/CHIP, VCP/p97, CHRNA3, and UBXN2A that modulates the ubiquitination and endoplasmic reticulum-associated degradation (ERAD) of CHRNA3. Within the complex UBXN2A acts as a scaffold protein required for the interaction of CHRNA3 with VCP/p97, this interaction also inhibits CHRNA3 ubiquitination by STUB1/CHIP and subsequently ERAD. Interacts with UBXN2A (via SEP domain), the interaction is required for the interaction of CHRNA3 in the STUB1:VCP:UBXN2A complex. Interacts with RIC3; which is required for proper folding and assembly. In terms of processing, ubiquitinated; by STUB1/CHIP and thereafter degraded by the 26S proteosome complex. In terms of tissue distribution, expressed in neurons. Expressed in umbrella cells of urothelium (at protein level).

The protein resides in the synaptic cell membrane. The protein localises to the cell membrane. It is found in the endoplasmic reticulum. Its subcellular location is the golgi apparatus. It carries out the reaction Ca(2+)(in) = Ca(2+)(out). The enzyme catalyses K(+)(in) = K(+)(out). The catalysed reaction is Na(+)(in) = Na(+)(out). Activated by a myriad of ligands such as acetylcholine, cytisine, nicotine, choline and epibatidine. The heteropentamer CHRNA3:CHRNB2 activity is blocked by alpha-conotoxins ImI, ImII, PnIA, GID and MII. The heteropentamer CHRNA3:CHRNB4 activity is blocked by the alpha-conotoxin ImI and AuIB. In terms of biological role, component of neuronal acetylcholine receptors (nAChRs) that function as pentameric, ligand-gated cation channels with high calcium permeability among other activities. nAChRs are excitatory neurotrasnmitter receptors formed by a collection of nAChR subunits known to mediate synaptic transmission in the nervous system and the neuromuscular junction. Each nAchR subunit confers differential attributes to channel properties, including activation, deactivation and desensitization kinetics, pH sensitivity, cation permeability, and binding to allosteric modulators. CHRNA3 forms heteropentameric neuronal acetylcholine receptors with CHRNB2 and CHRNB4. CHRNA3:CHRNB4 being predominant in neurons of the autonomic ganglia, it is known as ganglionic nicotinic receptor. CHRNA3:CHRNB4 also plays an important role in the habenulo-interpeduncular tract, modulating the mesolimbic dopamine system and affecting reward circuits and addiction. Hypothalamic CHRNA3:CHRNB4 nAChR activation by nicotine leads to activation of POMC neurons and a decrease in food intake. Also expressed in the urothelium where it modulates reflex bladder activity by increasing intracellular calcium through extracellular influx and basal ATP release. This is Neuronal acetylcholine receptor subunit alpha-3 (Chrna3) from Rattus norvegicus (Rat).